The chain runs to 180 residues: Inosine/xanthosine triphosphatase (180 aa).

A substrate-binding site is contributed by 8-13 (TTNPAK). Asp38 serves as a coordination point for Mg(2+).

It belongs to the YjjX NTPase family. In terms of assembly, homodimer. It depends on Mg(2+) as a cofactor. Mn(2+) serves as cofactor.

The enzyme catalyses XTP + H2O = XDP + phosphate + H(+). It catalyses the reaction ITP + H2O = IDP + phosphate + H(+). Its function is as follows. Phosphatase that hydrolyzes non-canonical purine nucleotides such as XTP and ITP to their respective diphosphate derivatives. Probably excludes non-canonical purines from DNA/RNA precursor pool, thus preventing their incorporation into DNA/RNA and avoiding chromosomal lesions. The polypeptide is Inosine/xanthosine triphosphatase (Yersinia pseudotuberculosis serotype O:1b (strain IP 31758)).